An 84-amino-acid polypeptide reads, in one-letter code: RQC P-site tRNA stabilizing factor (84 aa).

Positions 1-64 (MRIDKFLQSV…IEEYTILQIP (64 aa)) constitute an S4 RNA-binding domain.

The protein belongs to the RqcP family. Associates with stalled 50S ribosomal subunits. Binds to RqcH, 23S rRNA and the P-site tRNA. Does not require RqcH for association with 50S subunits.

In terms of biological role, key component of the ribosome quality control system (RQC), a ribosome-associated complex that mediates the extraction of incompletely synthesized nascent chains from stalled ribosomes and their subsequent degradation. RqcH recruits Ala-charged tRNA, and with RqcP directs the elongation of stalled nascent chains on 50S ribosomal subunits, leading to non-templated C-terminal alanine extensions (Ala tail). The Ala tail promotes nascent chain degradation. RqcP is associated with the translocation-like movement of the peptidyl-tRNA from the A-site into the P-site. In Helicobacter pylori (strain ATCC 700392 / 26695) (Campylobacter pylori), this protein is RQC P-site tRNA stabilizing factor.